A 358-amino-acid chain; its full sequence is Peptide chain release factor 1 (358 aa).

An N5-methylglutamine modification is found at glutamine 236.

The protein belongs to the prokaryotic/mitochondrial release factor family. Methylated by PrmC. Methylation increases the termination efficiency of RF1.

It localises to the cytoplasm. Functionally, peptide chain release factor 1 directs the termination of translation in response to the peptide chain termination codons UAG and UAA. In Corynebacterium aurimucosum (strain ATCC 700975 / DSM 44827 / CIP 107346 / CN-1) (Corynebacterium nigricans), this protein is Peptide chain release factor 1.